The sequence spans 105 residues: Integration host factor subunit alpha (105 aa).

Belongs to the bacterial histone-like protein family. As to quaternary structure, heterodimer of an alpha and a beta chain.

Its function is as follows. This protein is one of the two subunits of integration host factor, a specific DNA-binding protein that functions in genetic recombination as well as in transcriptional and translational control. In Rhodospirillum rubrum (strain ATCC 11170 / ATH 1.1.1 / DSM 467 / LMG 4362 / NCIMB 8255 / S1), this protein is Integration host factor subunit alpha.